A 352-amino-acid chain; its full sequence is Glycerol-3-phosphate dehydrogenase [NAD(P)+] (352 aa).

NADPH-binding residues include W11, R37, and K112. Sn-glycerol 3-phosphate is bound by residues K112, G153, and S155. A157 provides a ligand contact to NADPH. Sn-glycerol 3-phosphate-binding residues include K208, D261, S271, R272, and N273. Catalysis depends on K208, which acts as the Proton acceptor. Position 272 (R272) interacts with NADPH. 2 residues coordinate NADPH: V296 and E298.

This sequence belongs to the NAD-dependent glycerol-3-phosphate dehydrogenase family.

It localises to the cytoplasm. It catalyses the reaction sn-glycerol 3-phosphate + NAD(+) = dihydroxyacetone phosphate + NADH + H(+). The enzyme catalyses sn-glycerol 3-phosphate + NADP(+) = dihydroxyacetone phosphate + NADPH + H(+). It participates in membrane lipid metabolism; glycerophospholipid metabolism. Its function is as follows. Catalyzes the reduction of the glycolytic intermediate dihydroxyacetone phosphate (DHAP) to sn-glycerol 3-phosphate (G3P), the key precursor for phospholipid synthesis. This Polaromonas naphthalenivorans (strain CJ2) protein is Glycerol-3-phosphate dehydrogenase [NAD(P)+].